We begin with the raw amino-acid sequence, 125 residues long: Prefoldin subunit beta (125 aa).

Belongs to the prefoldin subunit beta family. Heterohexamer of two alpha and four beta subunits.

Its subcellular location is the cytoplasm. Functionally, molecular chaperone capable of stabilizing a range of proteins. Seems to fulfill an ATP-independent, HSP70-like function in archaeal de novo protein folding. This is Prefoldin subunit beta from Halobacterium salinarum (strain ATCC 29341 / DSM 671 / R1).